Consider the following 336-residue polypeptide: Ketoreductase adrE (336 aa).

Tyrosine 171 is a binding site for NADP(+).

This sequence belongs to the NAD(P)-dependent epimerase/dehydratase family. Dihydroflavonol-4-reductase subfamily.

It participates in secondary metabolite biosynthesis; terpenoid biosynthesis. Ketoreductase; part of the gene cluster that mediates the biosynthesis of andrastins, meroterpenoid compounds that exhibit inhibitory activity against ras farnesyltransferase, suggesting that they could be promising leads for antitumor agents. The first step of the pathway is the synthesis of 3,5-dimethylorsellinic acid (DMOA) by the polyketide synthase adrD via condensation of one acetyl-CoA starter unit with 3 malonyl-CoA units and 2 methylations. DMAO is then converted to farnesyl-DMAO by the prenyltransferase adrG. The methyltransferase adrK catalyzes the methylation of the carboxyl group of farnesyl-DMAO to farnesyl-DMAO methyl ester which is further converted to epoxyfarnesyl-DMAO methyl ester by the FAD-dependent monooxygenase adrH. The terpene cyclase adrI then catalyzes the carbon skeletal rearrangement to generate the andrastin E, the first compound in the pathway having the andrastin scaffold, with the tetracyclic ring system. The post-cyclization tailoring enzymes adrF, adrE, adrJ, and adrA, are involved in the conversion of andrastin E into andrastin A. The short chain dehydrogenase adrF is responsible for the oxidation of the C-3 a hydroxyl group of andrastin E to yield the corresponding ketone, andrastin D. The ketoreductase adrE stereoselectively reduces the carbonyl moiety to reverse the stereochemistry of the C-3 position to yield andrastin F. The acetyltransferase adrJ is the acetyltransferase that attaches the acetyl group to the C-3 hydroxyl group of andrastin F to yield andrastin C. Finally, the cytochrome P450 monooxygenase adrA catalyzes two sequential oxidation reactions of the C-23 methyl group, to generate the corresponding alcohol andrastin B, and aldehyde andrastin A. This chain is Ketoreductase adrE, found in Penicillium rubens (strain ATCC 28089 / DSM 1075 / NRRL 1951 / Wisconsin 54-1255) (Penicillium chrysogenum).